The following is a 627-amino-acid chain: (-)-alpha-pinene synthase 2, chloroplastic (627 aa).

Residues 1–36 (MALVSIAPLASKSCLHKSLSSSAHELKTICRTIPTL) constitute a chloroplast transit peptide. 3 residues coordinate Mg(2+): Asp-378, Asp-382, and Asp-530. The DDXXD motif motif lies at 378–382 (DDMYD).

The protein belongs to the terpene synthase family. Tpsd subfamily. Requires Mg(2+) as cofactor. The cofactor is Mn(2+).

It is found in the plastid. Its subcellular location is the chloroplast. It carries out the reaction (2E)-geranyl diphosphate = (1S,5S)-beta-pinene + diphosphate. The enzyme catalyses (2E)-geranyl diphosphate = (1S,5S)-alpha-pinene + diphosphate. Its pathway is terpene metabolism; oleoresin biosynthesis. In terms of biological role, terpene synthase (TPS) involved in the biosynthesis of monoterpene natural products included in conifer oleoresin secretions and volatile emissions; these compounds contribute to biotic and abiotic stress defense against herbivores and pathogens. Catalyzes the conversion of (2E)-geranyl diphosphate (GPP) to (1S,5S)-beta-pinene. The protein is (-)-alpha-pinene synthase 2, chloroplastic of Picea glauca (White spruce).